The chain runs to 499 residues: ATP synthase subunit beta, chloroplastic (499 aa).

Position 170–177 (170–177 (GGAGVGKT)) interacts with ATP.

Belongs to the ATPase alpha/beta chains family. F-type ATPases have 2 components, CF(1) - the catalytic core - and CF(0) - the membrane proton channel. CF(1) has five subunits: alpha(3), beta(3), gamma(1), delta(1), epsilon(1). CF(0) has four main subunits: a(1), b(1), b'(1) and c(9-12).

It localises to the plastid. The protein resides in the chloroplast thylakoid membrane. It carries out the reaction ATP + H2O + 4 H(+)(in) = ADP + phosphate + 5 H(+)(out). In terms of biological role, produces ATP from ADP in the presence of a proton gradient across the membrane. The catalytic sites are hosted primarily by the beta subunits. The protein is ATP synthase subunit beta, chloroplastic of Ipomoea purpurea (Common morning glory).